We begin with the raw amino-acid sequence, 554 residues long: Methyl-CpG-binding domain protein 4 (554 aa).

The interval 1-23 (MESPNLGDNRVRGESLVPDPPWD) is disordered. An MBD domain is found at 63 to 135 (STTATEGHKP…EDFNFTVLPK (73 aa)). Residues 154–164 (QPNETDVSKQN) show a composition bias toward polar residues. Disordered regions lie at residues 154-195 (QPNE…SNSN) and 209-252 (DVDS…RKRA). A compositionally biased stretch (low complexity) spans 178–195 (LPSGTSESPESSGLSNSN). A phosphoserine mark is found at Ser-296 and Ser-402. Asp-534 is an active-site residue.

Interacts with MLH1.

It is found in the nucleus. Its function is as follows. Mismatch-specific DNA N-glycosylase involved in DNA repair. Has thymine glycosylase activity and is specific for G:T mismatches within methylated and unmethylated CpG sites. Can also remove uracil or 5-fluorouracil in G:U mismatches. Has no lyase activity. Was first identified as methyl-CpG-binding protein. The polypeptide is Methyl-CpG-binding domain protein 4 (Mbd4) (Mus musculus (Mouse)).